Consider the following 305-residue polypeptide: MAGINSILQTFEGLGEGDRAETIKVLSDMMREGTPRQPAKKKVNGFMGYRSYYSSMFSQLPQKERSPILTTLWQQDPFHKEWDFMCAVYSAIRDQLAEQNVTLQTWIQFAVTPLGIAPRTGYMEALGWVLTRLDDGTHTLQRMDVPDIRYHLQPMNGLGLFLSCLNGGLPIFDPQNIISQLSDPAFDVICINTQVPKIPGTFDTMSGFRQLAKQNPALAMSSLFQLPDTDPLIAQGVGMYEFHSVVSQPVQNHGMPPTTVPPMESHSHEDNMDFAKINEAELDAILTMYDTNTNGYIDPNKPQGF.

The segment at residues 38–93 (PAKKKVNGFMGYRSYYSSMFSQLPQKERSPILTTLWQQDPFHKEWDFMCAVYSAIR) is a DNA-binding region (alpha box).

This sequence belongs to the MATALPHA1 family.

The protein localises to the nucleus. Functionally, controls fertilization, probably by determining the mating type. May be involved in the post-fertilization steps of the sexual cycle besides mat+. It is required for the developmental events that occur in the female organ after fertilization. This is Mat- sexual cell fertilization-promoting factor (FMR1) from Podospora anserina (Pleurage anserina).